The chain runs to 359 residues: RNA-binding protein 4B (359 aa).

2 RRM domains span residues 2-72 (VKLF…ASKN) and 78-148 (TKLH…LSTS). Residues 160 to 177 (SGCYRCGKEGHWSKECPV) form a CCHC-type zinc finger. The tract at residues 196 to 359 (AVRPPYTMGY…YVDRARYSAF (164 aa)) is interaction with TNPO3.

As to quaternary structure, interacts with TNPO3, which may mediate nuclear import of the protein.

The protein resides in the nucleus. It is found in the nucleolus. Functionally, required for the translational activation of PER1 mRNA in response to circadian clock. Binds directly to the 3'-UTR of the PER1 mRNA. The chain is RNA-binding protein 4B (RBM4B) from Sus scrofa (Pig).